A 202-amino-acid chain; its full sequence is GTP cyclohydrolase 1 (202 aa).

Residues cysteine 90, histidine 93, and cysteine 163 each contribute to the Zn(2+) site.

Belongs to the GTP cyclohydrolase I family. Homomer.

The catalysed reaction is GTP + H2O = 7,8-dihydroneopterin 3'-triphosphate + formate + H(+). Its pathway is cofactor biosynthesis; 7,8-dihydroneopterin triphosphate biosynthesis; 7,8-dihydroneopterin triphosphate from GTP: step 1/1. This is GTP cyclohydrolase 1 from Mycolicibacterium gilvum (strain PYR-GCK) (Mycobacterium gilvum (strain PYR-GCK)).